A 231-amino-acid chain; its full sequence is Ribonuclease 3 (231 aa).

Positions 1 to 134 (MKTLEKKLAE…FLGALLLDAG (134 aa)) constitute an RNase III domain. Glutamate 47 provides a ligand contact to Mg(2+). Aspartate 51 is a catalytic residue. 2 residues coordinate Mg(2+): aspartate 120 and glutamate 123. Residue glutamate 123 is part of the active site. The DRBM domain occupies 160 to 229 (DYKTALQELL…AKNALEKLQR (70 aa)).

This sequence belongs to the ribonuclease III family. In terms of assembly, homodimer. Requires Mg(2+) as cofactor.

Its subcellular location is the cytoplasm. The enzyme catalyses Endonucleolytic cleavage to 5'-phosphomonoester.. Functionally, digests double-stranded RNA. Involved in the processing of primary rRNA transcript to yield the immediate precursors to the large and small rRNAs (23S and 16S). Also processes some mRNAs, and tRNAs when they are encoded in the rRNA operon. Its function is as follows. CRISPR (clustered regularly interspaced short palindromic repeat) is an adaptive immune system that provides protection against mobile genetic elements (viruses, transposable elements and conjugative plasmids). CRISPR clusters contain spacers, sequences complementary to antecedent mobile elements, and target invading nucleic acids. CRISPR clusters are transcribed and processed into CRISPR RNA (crRNA). In this organism endogenous ribonuclease 3 and Cas9 are required for correct coprocessing of pre-crRNA and the trans-encoded small RNA (tracrRNA). Cas9, crRNA and tracrRNA are required for cleavage of invading DNA. Complements pre-crRNA and tracrRNA coprocessing defects in an rnc deletion in S.pyogenes strain 370. The polypeptide is Ribonuclease 3 (Streptococcus mutans serotype c (strain ATCC 700610 / UA159)).